Reading from the N-terminus, the 197-residue chain is Probable GTP-binding protein EngB (197 aa).

In terms of domain architecture, EngB-type G spans 25-197 (SAPEIAFAGR…VRDEFFKFTR (173 aa)). Residues 33 to 40 (GRSNVGKS), 60 to 64 (GCTRQ), 79 to 82 (DLPG), 146 to 149 (TKID), and 177 to 179 (MSI) contribute to the GTP site. The Mg(2+) site is built by Ser40 and Thr62.

This sequence belongs to the TRAFAC class TrmE-Era-EngA-EngB-Septin-like GTPase superfamily. EngB GTPase family. The cofactor is Mg(2+).

In terms of biological role, necessary for normal cell division and for the maintenance of normal septation. This Wolbachia pipientis wMel protein is Probable GTP-binding protein EngB.